The following is an 806-amino-acid chain: Glycerol-3-phosphate acyltransferase (806 aa).

The HXXXXD motif signature appears at 305-310 (CHRSHM).

This sequence belongs to the GPAT/DAPAT family.

It localises to the cell inner membrane. It carries out the reaction sn-glycerol 3-phosphate + an acyl-CoA = a 1-acyl-sn-glycero-3-phosphate + CoA. It participates in phospholipid metabolism; CDP-diacylglycerol biosynthesis; CDP-diacylglycerol from sn-glycerol 3-phosphate: step 1/3. The protein is Glycerol-3-phosphate acyltransferase of Salmonella paratyphi B (strain ATCC BAA-1250 / SPB7).